Here is a 512-residue protein sequence, read N- to C-terminus: Tyrosine decarboxylase (512 aa).

L-tyrosine is bound by residues Pro-100, His-205, and His-320. Position 321 is an N6-(pyridoxal phosphate)lysine (Lys-321). Tyr-350 lines the L-tyrosine pocket.

This sequence belongs to the group II decarboxylase family. In terms of assembly, homodimer. Pyridoxal 5'-phosphate serves as cofactor. Mainly expressed in roots, stems and capsule walls.

It carries out the reaction L-tyrosine + H(+) = tyramine + CO2. Tyrosine decarboxylase that converts tyrosine into tyramine, a precursor of isoquinoline alkaloids and various amides. The chain is Tyrosine decarboxylase from Papaver somniferum (Opium poppy).